A 504-amino-acid chain; its full sequence is Glycerol kinase (504 aa).

Residue Thr-12 participates in ADP binding. Thr-12, Thr-13, and Ser-14 together coordinate ATP. Position 12 (Thr-12) interacts with sn-glycerol 3-phosphate. Residue Arg-16 coordinates ADP. Residues Arg-82, Glu-83, Tyr-134, and Asp-246 each coordinate sn-glycerol 3-phosphate. Arg-82, Glu-83, Tyr-134, Asp-246, and Gln-247 together coordinate glycerol. Positions 268 and 312 each coordinate ADP. ATP-binding residues include Thr-268, Gly-312, Gln-316, and Gly-413. Residues Gly-413 and Asn-417 each coordinate ADP.

It belongs to the FGGY kinase family.

The enzyme catalyses glycerol + ATP = sn-glycerol 3-phosphate + ADP + H(+). The protein operates within polyol metabolism; glycerol degradation via glycerol kinase pathway; sn-glycerol 3-phosphate from glycerol: step 1/1. Inhibited by fructose 1,6-bisphosphate (FBP). Functionally, key enzyme in the regulation of glycerol uptake and metabolism. Catalyzes the phosphorylation of glycerol to yield sn-glycerol 3-phosphate. The chain is Glycerol kinase from Paenarthrobacter aurescens (strain TC1).